The following is an 80-amino-acid chain: Clavanin-E (80 aa).

Residues 1-19 (MKTTILILLILGLGINAKS) form the signal peptide. Residues 20–29 (LEERKSEEEK) constitute a propeptide that is removed on maturation. At phenylalanine 52 the chain carries Phenylalanine amide. Positions 54–80 (DDQQDNGKFYGYYAEDNGKHWYDTGDQ) are excised as a propeptide.

Its subcellular location is the secreted. Has antimicrobial activity. This is Clavanin-E from Styela clava (Sea squirt).